Here is a 599-residue protein sequence, read N- to C-terminus: ATP-dependent zinc metalloprotease FtsH 3 (599 aa).

Topologically, residues Met-1–Asn-7 are cytoplasmic. Residues Ile-8 to Ile-28 traverse the membrane as a helical segment. The Extracellular portion of the chain corresponds to Gly-29–Ser-128. A helical membrane pass occupies residues Ile-129 to Ala-149. Residues Ile-150–Lys-599 lie on the Cytoplasmic side of the membrane. An ATP-binding site is contributed by Gly-214–Thr-221. His-436 lines the Zn(2+) pocket. The active site involves Glu-437. 2 residues coordinate Zn(2+): His-440 and Asp-512.

It in the central section; belongs to the AAA ATPase family. This sequence in the C-terminal section; belongs to the peptidase M41 family. Homohexamer. Requires Zn(2+) as cofactor.

Its subcellular location is the cell membrane. Its function is as follows. Acts as a processive, ATP-dependent zinc metallopeptidase for both cytoplasmic and membrane proteins. Plays a role in the quality control of integral membrane proteins. In Phytoplasma mali (strain AT), this protein is ATP-dependent zinc metalloprotease FtsH 3.